A 392-amino-acid chain; its full sequence is Probable myosin light chain kinase DDB_G0271550 (392 aa).

The region spanning 20 to 278 (YEFGPEIGRG…ASQCIKHPWL (259 aa)) is the Protein kinase domain. ATP contacts are provided by residues 26–34 (IGRGAFSIV) and K49. D142 functions as the Proton acceptor in the catalytic mechanism. Polar residues predominate over residues 317-326 (SQSTPNLHSA). A disordered region spans residues 317–392 (SQSTPNLHSA…NNNNNNNNNI (76 aa)). The segment covering 327-392 (NSNTNTNSLS…NNNNNNNNNI (66 aa)) has biased composition (low complexity).

This sequence belongs to the protein kinase superfamily. CAMK Ser/Thr protein kinase family. CaMK subfamily.

The catalysed reaction is L-seryl-[myosin light chain] + ATP = O-phospho-L-seryl-[myosin light chain] + ADP + H(+). It carries out the reaction L-threonyl-[myosin light chain] + ATP = O-phospho-L-threonyl-[myosin light chain] + ADP + H(+). May phosphorylate a specific serine in the N-terminus of a myosin light chain. The chain is Probable myosin light chain kinase DDB_G0271550 from Dictyostelium discoideum (Social amoeba).